We begin with the raw amino-acid sequence, 66 residues long: COP9 signalosome complex subunit 6a (66 aa).

This sequence belongs to the peptidase M67A family. CSN6 subfamily. Component of the CSN complex, probably composed of CSN1, CSN2, CSN3, CSN4, CSN5 (CSN5A or CSN5B), CSN6 (CSN6A or CSN6B), CSN7 and CSN8.

The protein localises to the cytoplasm. Its subcellular location is the nucleus. Its function is as follows. Component of the COP9 signalosome complex (CSN), a complex involved in various cellular and developmental processes such as photomorphogenesis and auxin and jasmonate responses. The CSN complex is an essential regulator of the ubiquitin (Ubl) conjugation pathway by mediating the deneddylation of the cullin subunits of SCF-type E3 ligase complexes, leading to decrease the Ubl ligase activity of SCF. It is involved in repression of photomorphogenesis in darkness by regulating the activity of COP1-containing Ubl ligase complexes. This chain is COP9 signalosome complex subunit 6a (CSN6A), found in Brassica oleracea (Wild cabbage).